Here is a 215-residue protein sequence, read N- to C-terminus: MDQENERNISRLWRAFRTVKEMVKDRGYFITQEEVELPLEDFKAKYCDSMGRPQRKMMSFQANPTEESISKFPDMGSLWVEFCDEPSVGVKTMKTFVIHIQEKNFQTGIFVYQNNITPSAMKLVPSIPPATIETFNEAALVVNITHHELVPKHIRLSSDEKRELLKRYRLKESQLPRIQRADPVALYLGLKRGEVVKIIRKSETSGRYASYRICM.

The protein belongs to the archaeal Rpo5/eukaryotic RPB5 RNA polymerase subunit family. As to quaternary structure, component of the RNA polymerase I (Pol I), RNA polymerase II (Pol II) and RNA polymerase III (Pol III) complexes. Component of the RNA polymerase I (Pol I) complex consisting of 14 subunits: RPA135, RPA190, RPC40, RPA14, RPB5, RPO26, RPA43, RPB8, RPA12, RPB10, RPC19, RPC10, RPA49 and RPA34. The complex is composed of a horseshoe-shaped core containing ten subunits (RPA135, RPA190, RPB5, RPO26, RPB8, RPB10, RPC10, RPA12, RPC19 and RPC40) where RPA135 and RPA190 form the DNA-binding cleft. Outside of the core, RPA14 and RPA43 form the stalk that mediates interactions with transcription initiation factors and newly synthesized RNA. Component of the RNA polymerase II (Pol II) complex consisting of 12 subunits: RPO21, RPB2, RPB3, RPB4, RPB5, RPO26, RPB7, RPB8, RPB9, RPB10 and RPC10. Component of the RNA polymerase III (Pol III) complex consisting of 17 subunits.

The protein localises to the nucleus. Its function is as follows. DNA-dependent RNA polymerases catalyze the transcription of DNA into RNA using the four ribonucleoside triphosphates as substrates. Common component of RNA polymerases I, II and III which synthesize ribosomal RNA precursors, mRNA precursors and many functional non-coding RNAs, and small RNAs, such as 5S rRNA and tRNAs, respectively. Pol II is the central component of the basal RNA polymerase II transcription machinery. RNA polymerase complexes are composed of mobile elements that move relative to each other. In Pol II, RPB5 is part of the lower jaw surrounding the central large cleft and thought to grab the incoming DNA template. Seems to be the major component in this process. The chain is DNA-directed RNA polymerases I, II, and III subunit RPABC1 (RPB5) from Saccharomyces cerevisiae (strain ATCC 204508 / S288c) (Baker's yeast).